The following is a 172-amino-acid chain: Endoribonuclease YbeY (172 aa).

Zn(2+)-binding residues include histidine 136, histidine 140, and histidine 146.

The protein belongs to the endoribonuclease YbeY family. Zn(2+) is required as a cofactor.

The protein localises to the cytoplasm. Its function is as follows. Single strand-specific metallo-endoribonuclease involved in late-stage 70S ribosome quality control and in maturation of the 3' terminus of the 16S rRNA. The polypeptide is Endoribonuclease YbeY (Rickettsia canadensis (strain McKiel)).